We begin with the raw amino-acid sequence, 301 residues long: Beta-1,3-galactosyltransferase 5 (301 aa).

Over 1 to 7 (MAFPKMR) the chain is Cytoplasmic. A helical; Signal-anchor for type II membrane protein transmembrane segment spans residues 8–28 (LMYVCLLVLGALCLYFSMYSL). Over 29-301 (NLFKEQSFVY…LLDYWQALEN (273 aa)) the chain is Lumenal. Residues Asn130, Asn174, and Asn231 are each glycosylated (N-linked (GlcNAc...) asparagine).

Belongs to the glycosyltransferase 31 family.

It localises to the golgi apparatus membrane. It carries out the reaction a globoside Gb4Cer (d18:1(4E)) + UDP-alpha-D-galactose = a globoside GalGb4Cer (d18:1(4E)) + UDP + H(+). The protein operates within protein modification; protein glycosylation. Functionally, catalyzes the transfer of Gal to GlcNAc-based acceptors with a preference for the core3 O-linked glycan GlcNAc(beta1,3)GalNAc structure. Can use glycolipid LC3Cer as an efficient acceptor. The protein is Beta-1,3-galactosyltransferase 5 (B3GALT5) of Pan paniscus (Pygmy chimpanzee).